The sequence spans 512 residues: Probable cytochrome P450 6d2 (512 aa).

Cysteine 457 contributes to the heme binding site.

The protein belongs to the cytochrome P450 family. Requires heme as cofactor.

Its subcellular location is the endoplasmic reticulum membrane. The protein localises to the microsome membrane. Functionally, may be involved in the metabolism of insect hormones and in the breakdown of synthetic insecticides. This chain is Probable cytochrome P450 6d2 (Cyp6d2), found in Drosophila melanogaster (Fruit fly).